A 417-amino-acid polypeptide reads, in one-letter code: D-amino acid dehydrogenase (417 aa).

Residue 3–17 (VVILGSGVVGVSTAW) participates in FAD binding.

Belongs to the DadA oxidoreductase family. It depends on FAD as a cofactor.

The catalysed reaction is a D-alpha-amino acid + A + H2O = a 2-oxocarboxylate + AH2 + NH4(+). It participates in amino-acid degradation; D-alanine degradation; NH(3) and pyruvate from D-alanine: step 1/1. Functionally, oxidative deamination of D-amino acids. This Pectobacterium atrosepticum (strain SCRI 1043 / ATCC BAA-672) (Erwinia carotovora subsp. atroseptica) protein is D-amino acid dehydrogenase.